The primary structure comprises 179 residues: Large ribosomal subunit protein uL6 (179 aa).

Belongs to the universal ribosomal protein uL6 family. Part of the 50S ribosomal subunit.

Functionally, this protein binds to the 23S rRNA, and is important in its secondary structure. It is located near the subunit interface in the base of the L7/L12 stalk, and near the tRNA binding site of the peptidyltransferase center. This is Large ribosomal subunit protein uL6 from Bacillus subtilis (strain 168).